Here is a 223-residue protein sequence, read N- to C-terminus: Phosphoribosylformylglycinamidine synthase subunit PurQ (223 aa).

The region spanning 2 to 223 (KIAVVVFPGS…KSLLKAGVQA (222 aa)) is the Glutamine amidotransferase type-1 domain. The active-site Nucleophile is the Cys86. Residues His195 and Glu197 contribute to the active site.

As to quaternary structure, part of the FGAM synthase complex composed of 1 PurL, 1 PurQ and 2 PurS subunits.

The protein resides in the cytoplasm. The enzyme catalyses N(2)-formyl-N(1)-(5-phospho-beta-D-ribosyl)glycinamide + L-glutamine + ATP + H2O = 2-formamido-N(1)-(5-O-phospho-beta-D-ribosyl)acetamidine + L-glutamate + ADP + phosphate + H(+). The catalysed reaction is L-glutamine + H2O = L-glutamate + NH4(+). Its pathway is purine metabolism; IMP biosynthesis via de novo pathway; 5-amino-1-(5-phospho-D-ribosyl)imidazole from N(2)-formyl-N(1)-(5-phospho-D-ribosyl)glycinamide: step 1/2. In terms of biological role, part of the phosphoribosylformylglycinamidine synthase complex involved in the purines biosynthetic pathway. Catalyzes the ATP-dependent conversion of formylglycinamide ribonucleotide (FGAR) and glutamine to yield formylglycinamidine ribonucleotide (FGAM) and glutamate. The FGAM synthase complex is composed of three subunits. PurQ produces an ammonia molecule by converting glutamine to glutamate. PurL transfers the ammonia molecule to FGAR to form FGAM in an ATP-dependent manner. PurS interacts with PurQ and PurL and is thought to assist in the transfer of the ammonia molecule from PurQ to PurL. The chain is Phosphoribosylformylglycinamidine synthase subunit PurQ from Lactobacillus acidophilus (strain ATCC 700396 / NCK56 / N2 / NCFM).